Here is a 445-residue protein sequence, read N- to C-terminus: ATP-dependent protease ATPase subunit HslU (445 aa).

Residues isoleucine 17, 59 to 64 (GVGKTE), aspartate 254, glutamate 319, and arginine 391 each bind ATP.

The protein belongs to the ClpX chaperone family. HslU subfamily. As to quaternary structure, a double ring-shaped homohexamer of HslV is capped on each side by a ring-shaped HslU homohexamer. The assembly of the HslU/HslV complex is dependent on binding of ATP.

It localises to the cytoplasm. Functionally, ATPase subunit of a proteasome-like degradation complex; this subunit has chaperone activity. The binding of ATP and its subsequent hydrolysis by HslU are essential for unfolding of protein substrates subsequently hydrolyzed by HslV. HslU recognizes the N-terminal part of its protein substrates and unfolds these before they are guided to HslV for hydrolysis. The protein is ATP-dependent protease ATPase subunit HslU of Pseudomonas fluorescens (strain SBW25).